The chain runs to 333 residues: MDERLLSGESAYEDADLEYSLRPQTLRQYIGQDKAKHNLEVFIEAAKMREETLDHVLLYGPPGLGKTTLANIIANEMGVNVRTTSGPAIERPGDLAAVLTSLQPGDVLFIDEIHRLHRSIEEVLYPAMEDFCLDIVIGKGPSARSVRLDLPPFTLVGATTRAGALSAPLRDRFGVLSRLEYYTVDQLSAIVERTAEVFEVEIDSLAALEIARRARGTPRIANRLLRRVRDFAQVRGNGTVTMEITQMALELLQVDKLGLDHIDHKLLLGIIEKFRGGPVGLETVSATIGEESHTIEDVYEPYLLQIGFLQRTPRGRIVTPLAYEHFGMEMPKV.

Residues 1 to 182 form a large ATPase domain (RuvB-L) region; it reads MDERLLSGES…FGVLSRLEYY (182 aa). ATP contacts are provided by residues L21, R22, G63, K66, T67, T68, 129-131, R172, Y182, and R219; that span reads EDF. T67 is a Mg(2+) binding site. The tract at residues 183–253 is small ATPAse domain (RuvB-S); it reads TVDQLSAIVE…ITQMALELLQ (71 aa). Residues 256–333 are head domain (RuvB-H); it reads KLGLDHIDHK…EHFGMEMPKV (78 aa). DNA-binding residues include R311 and R316.

This sequence belongs to the RuvB family. Homohexamer. Forms an RuvA(8)-RuvB(12)-Holliday junction (HJ) complex. HJ DNA is sandwiched between 2 RuvA tetramers; dsDNA enters through RuvA and exits via RuvB. An RuvB hexamer assembles on each DNA strand where it exits the tetramer. Each RuvB hexamer is contacted by two RuvA subunits (via domain III) on 2 adjacent RuvB subunits; this complex drives branch migration. In the full resolvosome a probable DNA-RuvA(4)-RuvB(12)-RuvC(2) complex forms which resolves the HJ.

It is found in the cytoplasm. The catalysed reaction is ATP + H2O = ADP + phosphate + H(+). Functionally, the RuvA-RuvB-RuvC complex processes Holliday junction (HJ) DNA during genetic recombination and DNA repair, while the RuvA-RuvB complex plays an important role in the rescue of blocked DNA replication forks via replication fork reversal (RFR). RuvA specifically binds to HJ cruciform DNA, conferring on it an open structure. The RuvB hexamer acts as an ATP-dependent pump, pulling dsDNA into and through the RuvAB complex. RuvB forms 2 homohexamers on either side of HJ DNA bound by 1 or 2 RuvA tetramers; 4 subunits per hexamer contact DNA at a time. Coordinated motions by a converter formed by DNA-disengaged RuvB subunits stimulates ATP hydrolysis and nucleotide exchange. Immobilization of the converter enables RuvB to convert the ATP-contained energy into a lever motion, pulling 2 nucleotides of DNA out of the RuvA tetramer per ATP hydrolyzed, thus driving DNA branch migration. The RuvB motors rotate together with the DNA substrate, which together with the progressing nucleotide cycle form the mechanistic basis for DNA recombination by continuous HJ branch migration. Branch migration allows RuvC to scan DNA until it finds its consensus sequence, where it cleaves and resolves cruciform DNA. This Bacillus cereus (strain Q1) protein is Holliday junction branch migration complex subunit RuvB.